The primary structure comprises 213 residues: MKAYQREFIEFALEKQVLKFGEFTLKSGRKSPYFFNAGLFNTGRDLARLGRFYAAALVDSGIEFDVLFGPAYKGIPIATTTAVALADHHDVDTPYCFNRKEAKNHGEGGNLVGSKLEGRVMLVDDVITAGTAIRESMELIQANKADLAGVLVAIDRQEKGKGELSAIQEVERDFGCAVISIVSLTDLITYLEQQGNNTEHLEAVKAYRAQYGI.

Lys26 contributes to the 5-phospho-alpha-D-ribose 1-diphosphate binding site. 34-35 contacts orotate; sequence FF. 5-phospho-alpha-D-ribose 1-diphosphate is bound by residues 72–73, Arg99, Lys100, Lys103, His105, and 124–132; these read YK and DDVITAGTA. Residues Thr128 and Arg156 each coordinate orotate.

It belongs to the purine/pyrimidine phosphoribosyltransferase family. PyrE subfamily. In terms of assembly, homodimer. It depends on Mg(2+) as a cofactor.

The catalysed reaction is orotidine 5'-phosphate + diphosphate = orotate + 5-phospho-alpha-D-ribose 1-diphosphate. Its pathway is pyrimidine metabolism; UMP biosynthesis via de novo pathway; UMP from orotate: step 1/2. In terms of biological role, catalyzes the transfer of a ribosyl phosphate group from 5-phosphoribose 1-diphosphate to orotate, leading to the formation of orotidine monophosphate (OMP). This is Orotate phosphoribosyltransferase from Vibrio cholerae serotype O1 (strain ATCC 39315 / El Tor Inaba N16961).